Reading from the N-terminus, the 249-residue chain is Bax inhibitor 1 (249 aa).

6 helical membrane-spanning segments follow: residues 39–59, 65–85, 93–113, 119–139, 151–171, and 213–233; these read LVYLTLCVALAASAVGAYLHV, GMLTMLGCVGSIAWLFSVPVF, ILLAAALLEGASVGPLIKLAV, ILVTAFVGTAIAFGCFTCAAI, GLLSSGLSILLWLQFAASIFG, and HALTLFTDFVAVLVRILVIML.

It belongs to the BI1 family. In terms of tissue distribution, ubiquitous.

The protein resides in the membrane. Its function is as follows. Suppressor of apoptosis. This chain is Bax inhibitor 1 (BI1), found in Oryza sativa subsp. japonica (Rice).